The primary structure comprises 121 residues: Large ribosomal subunit protein bL20 (121 aa).

The protein belongs to the bacterial ribosomal protein bL20 family.

Functionally, binds directly to 23S ribosomal RNA and is necessary for the in vitro assembly process of the 50S ribosomal subunit. It is not involved in the protein synthesizing functions of that subunit. The chain is Large ribosomal subunit protein bL20 from Wolbachia sp. subsp. Drosophila simulans (strain wRi).